The chain runs to 265 residues: tRNA pseudouridine synthase A (265 aa).

The active-site Nucleophile is Asp-53. Tyr-111 contributes to the substrate binding site.

This sequence belongs to the tRNA pseudouridine synthase TruA family. As to quaternary structure, homodimer.

It carries out the reaction uridine(38/39/40) in tRNA = pseudouridine(38/39/40) in tRNA. In terms of biological role, formation of pseudouridine at positions 38, 39 and 40 in the anticodon stem and loop of transfer RNAs. The protein is tRNA pseudouridine synthase A of Acinetobacter baumannii (strain AB307-0294).